The primary structure comprises 307 residues: Small ribosomal subunit biogenesis GTPase RsgA (307 aa).

The interval 1–21 (MPSEHPFSDGISTPNPKETMN) is disordered. Residues 10-21 (GISTPNPKETMN) are compositionally biased toward polar residues. Residues 85–242 (RQDAWKTKLI…LIDSPGLQEF (158 aa)) enclose the CP-type G domain. GTP contacts are provided by residues 135–138 (NKAD) and 184–192 (GQSGMGKST). Residues C266, C271, H273, and C279 each coordinate Zn(2+).

This sequence belongs to the TRAFAC class YlqF/YawG GTPase family. RsgA subfamily. Monomer. Associates with 30S ribosomal subunit, binds 16S rRNA. Zn(2+) is required as a cofactor.

The protein localises to the cytoplasm. Functionally, one of several proteins that assist in the late maturation steps of the functional core of the 30S ribosomal subunit. Helps release RbfA from mature subunits. May play a role in the assembly of ribosomal proteins into the subunit. Circularly permuted GTPase that catalyzes slow GTP hydrolysis, GTPase activity is stimulated by the 30S ribosomal subunit. The chain is Small ribosomal subunit biogenesis GTPase RsgA from Neisseria gonorrhoeae (strain ATCC 700825 / FA 1090).